A 150-amino-acid polypeptide reads, in one-letter code: Large ribosomal subunit protein bL9 (150 aa).

Belongs to the bacterial ribosomal protein bL9 family.

In terms of biological role, binds to the 23S rRNA. This Burkholderia ambifaria (strain MC40-6) protein is Large ribosomal subunit protein bL9.